The following is a 109-amino-acid chain: Mannose-specific lectin (109 aa).

The Bulb-type lectin domain maps to 25–109 (MQEDCNLVLY…ARWATGTNIH (85 aa)). Residues Gln-26, Asp-28, Asn-30, Tyr-34, Asp-37, Lys-38, Trp-41, Ala-42, Asn-44, Gln-57, Asp-59, Asn-61, Tyr-65, Ile-72, Trp-73, Asn-76, Asn-83, Gln-89, Asp-91, Asn-93, Tyr-97, and Trp-102 each coordinate alpha-D-mannopyranose. Cys-29 and Cys-52 are joined by a disulfide.

In terms of assembly, homotetramer; antiparallel. Detected in bulbs (at protein level).

It is found in the secreted. Strongly inhibited by alpha-1,6-linked mannotriose. Inhibited by various oligosaccharides of P.pastoris mannan including, Man(alpha-l,6)Man-alpha-O-Me, Man(alpha-l,2)Man, Man(alpha-l,3)Man-alpha-O-Me, Man(alpha-l,2)Man, alpha-1,2-linked mannotriose, and Man(alpha-1,6)Glc, in order of decreasing potency. Weakly inhibited by elsinotetraose. Not inhibited by maltose or nigerose. Its function is as follows. D-mannose-binding lectin which binds alpha-D-linked mannose. Displays a high affinity for alpha-(1-6)-mannose oligomers. Able to interact with both terminal and internal alpha-D-mannosyl residues. Displays antiviral activity and therefore may contribute to defense against infections. This is Mannose-specific lectin from Narcissus pseudonarcissus (Daffodil).